The sequence spans 353 residues: UDP-N-acetylglucosamine--N-acetylmuramyl-(pentapeptide) pyrophosphoryl-undecaprenol N-acetylglucosamine transferase (353 aa).

Residues Asn-123, Arg-161, Ser-189, Ile-243, Ala-262–Glu-267, and Gln-287 each bind UDP-N-acetyl-alpha-D-glucosamine.

This sequence belongs to the glycosyltransferase 28 family. MurG subfamily.

The protein resides in the cell membrane. The catalysed reaction is di-trans,octa-cis-undecaprenyl diphospho-N-acetyl-alpha-D-muramoyl-L-alanyl-D-glutamyl-meso-2,6-diaminopimeloyl-D-alanyl-D-alanine + UDP-N-acetyl-alpha-D-glucosamine = di-trans,octa-cis-undecaprenyl diphospho-[N-acetyl-alpha-D-glucosaminyl-(1-&gt;4)]-N-acetyl-alpha-D-muramoyl-L-alanyl-D-glutamyl-meso-2,6-diaminopimeloyl-D-alanyl-D-alanine + UDP + H(+). The protein operates within cell wall biogenesis; peptidoglycan biosynthesis. In terms of biological role, cell wall formation. Catalyzes the transfer of a GlcNAc subunit on undecaprenyl-pyrophosphoryl-MurNAc-pentapeptide (lipid intermediate I) to form undecaprenyl-pyrophosphoryl-MurNAc-(pentapeptide)GlcNAc (lipid intermediate II). The polypeptide is UDP-N-acetylglucosamine--N-acetylmuramyl-(pentapeptide) pyrophosphoryl-undecaprenol N-acetylglucosamine transferase (Buchnera aphidicola subsp. Baizongia pistaciae (strain Bp)).